The following is a 732-amino-acid chain: DNA gyrase subunit B, mitochondrial (732 aa).

A Toprim domain is found at 513–620; that stretch reads SEIFIVEGDS…RYQRALFDAG (108 aa). The Mg(2+) site is built by Glu-519, Asp-593, and Asp-595.

It belongs to the type II topoisomerase GyrB family. Made up of two chains. The A chain is responsible for DNA breakage and rejoining; the B chain catalyzes ATP hydrolysis. It depends on Mg(2+) as a cofactor. Requires Mn(2+) as cofactor. The cofactor is Ca(2+).

It localises to the mitochondrion. It catalyses the reaction ATP-dependent breakage, passage and rejoining of double-stranded DNA.. Functionally, a type II topoisomerase that negatively supercoils closed circular double-stranded DNA in an ATP-dependent manner. The sequence is that of DNA gyrase subunit B, mitochondrial (GYRBM) from Arabidopsis thaliana (Mouse-ear cress).